We begin with the raw amino-acid sequence, 345 residues long: Calcium uniporter regulatory subunit MCUb, mitochondrial (345 aa).

The N-terminal 44 residues, 1 to 44 (MPGALSGRRMLPSGLCLGRWQLLRTIRARGRGDPRELPSTPQVL), are a transit peptide targeting the mitochondrion. Residues 188 to 221 (EIQKRRERHLMAKIDHLQEQLRPLEQVKAAIEAR) are a coiled coil. A run of 2 helical transmembrane segments spans residues 229-249 (LLWA…WLTW) and 259-279 (PVTF…FIIT). The stretch at 306–334 (FDVEQYNKLKEDLAEATESLESVRRSLRL) forms a coiled coil.

The protein belongs to the MCU (TC 1.A.77) family. In terms of assembly, homooligomer. Associates with the uniplex complex, composed of MCU, MICU1, MICU2 and EMRE/SMDT1, inhibiting its activity. As to expression, detected in lung, brain and heart, and at lower levels in white fat, skeletal muscle and spleen. Detected at very low levels in kidney and liver. Highly expressed in macrophages during the progression of skeletal muscle regeneration.

The protein localises to the mitochondrion inner membrane. Its function is as follows. Negative regulator of the mitochondrial calcium uniporter (MCU), a channel that mediates calcium uptake into the mitochondrial matrix. MCUB is required to limit mitochondrial calcium overload during stress. Acts as a dominant-negative regulator that displaces MCU from the functional uniplex complex and thereby decreases the association of calcium sensors MICU1 and MICU2, preventing channel gating. Mitochondrial calcium homeostasis plays key roles in mitochondrial metabolism. Acts as an important regulator of mitochondrial metabolism in response to stress in muscle cells: induced in response to fasting, leading to restrict mitochondrial calcium uptake, resulting in reprogramming of mitochondria toward fatty acid oxidation preference. Acts as a regulator of macrophage polarization during skeletal muscle regeneration: inhibition of mitochondrial calcium uptake drives differentiation of macrophages with anti-inflammatory profile, promoting the differentiation and fusion of satellite cells. The chain is Calcium uniporter regulatory subunit MCUb, mitochondrial from Mus musculus (Mouse).